The primary structure comprises 619 residues: Sodium-dependent dopamine transporter (619 aa).

Topologically, residues 1–56 are cytoplasmic; sequence MSKSKCSVGPMSSVVAPAKEPNAVGPREVELILVKEQNGVQLTNSTLINPPQTPVE. Residues 57–95 traverse the membrane as a discontinuously helical segment; it reads VQERETWSKKIDFLLSVIGFAVDLANVWRFPYLCYKNGG. Na(+) is bound by residues Gly75, Ala77, Val78, Asp79, and Asn82. Dopamine is bound at residue Asp79. 2 helical membrane-spanning segments follow: residues 96 to 127 and 128 to 171; these read GAFL…NREG and AAGV…FSSF. Ser149 and Gly153 together coordinate dopamine. The Extracellular portion of the chain corresponds to 172 to 235; the sequence is TMDLPWIHCN…SRGIDDLGPP (64 aa). Cys180 and Cys189 form a disulfide bridge. N-linked (GlcNAc...) asparagine glycans are attached at residues Asn181, Asn188, Asn196, and Asn204. The next 2 helical transmembrane spans lie at 236 to 255 and 256 to 286; these read RWQL…FSLW and KGVK…GVTL. Residues 287-305 lie on the Extracellular side of the membrane; sequence PGAMDGIRAYLSVDFYRLC. The chain crosses the membrane as a discontinuously helical span at residues 306–334; that stretch reads EASVWIDAATQVCFSLGVGFGVLIAFSSY. A chloride-binding site is contributed by Gln316. Residue Phe319 participates in dopamine binding. Residues Ser320 and Asn352 each contribute to the Na(+) site. A chloride-binding site is contributed by Ser320. The chain crosses the membrane as a helical span at residues 335-375; that stretch reads NKFTNNCYRDAIITTSINSLTSFSSGFVVFSFLGYMAQKHN. A chloride-binding site is contributed by Ser356. The Extracellular portion of the chain corresponds to 376–399; that stretch reads VPIRDVATDGPGLIFIIYPEAIAT. The next 3 helical transmembrane spans lie at 400-441, 442-465, and 466-498; these read LPLS…QLLH, RHRE…CVTN, and GGIY…AWFY. Na(+)-binding residues include Leu417, Asp420, and Ser421. Residues Ser421 and Ala422 each coordinate dopamine. Residues 499 to 515 are Cytoplasmic-facing; that stretch reads GVQQFSDDIKQMTGQRP. The helical transmembrane segment at 516–541 threads the bilayer; sequence NLYWRLCWKLVSPCFLLYVVVVSIVT. Topologically, residues 542–552 are extracellular; sequence FRPPHYGAYIF. The helical transmembrane segment at 553 to 582 threads the bilayer; sequence PDWANALGWIIATSSMAMVPIYATYKFCSL. The interval 560-589 is interaction with TGFB1I1; it reads GWIIATSSMAMVPIYATYKFCSLPGSFREK. Residues 583-619 are Cytoplasmic-facing; it reads PGSFREKLAYAITPEKDRQLVDRGEVRQFTLRHWLLV.

Belongs to the sodium:neurotransmitter symporter (SNF) (TC 2.A.22) family. SLC6A3 subfamily. As to quaternary structure, monomer. Homooligomer; disulfide-linked. Interacts with PRKCABP and TGFB1I1. Interacts (via N-terminus) with SYNGR3 (via N-terminus). Interacts with SLC18A2. Interacts with TOR1A (ATP-bound); TOR1A regulates SLC6A3 subcellular location. Interacts with alpha-synuclein/SNCA. Interacts with SEPTIN4. In terms of tissue distribution, found in the substantia nigra and ventral tegmental dopamine neurons, in fibers of the medial forebrain bundle ascending into the striatum, and within dense fiber networks and varicosities in the dorsal and ventral striatum (at protein level). Lower expression in the cortex (at protein level). Absent from the corpus callosum. Expressed throughout the retina at postnatal day 8.

The protein resides in the cell membrane. It localises to the cell projection. The protein localises to the neuron projection. It is found in the axon. The enzyme catalyses dopamine(out) + chloride(out) + Na(+)(out) = dopamine(in) + chloride(in) + Na(+)(in). It carries out the reaction (R)-noradrenaline(out) + chloride(out) + Na(+)(out) = (R)-noradrenaline(in) + chloride(in) + Na(+)(in). It catalyses the reaction dopamine(out) + chloride(out) + 2 Na(+)(out) = dopamine(in) + chloride(in) + 2 Na(+)(in). With respect to regulation, inhibited by amphetamine, bupropion, cocaine and ritalin. Inhibited by zinc ions. Its function is as follows. Mediates sodium- and chloride-dependent transport of dopamine. Also mediates sodium- and chloride-dependent transport of norepinephrine (also known as noradrenaline). Regulator of light-dependent retinal hyaloid vessel regression, downstream of OPN5 signaling. This chain is Sodium-dependent dopamine transporter (Slc6a3), found in Mus musculus (Mouse).